Here is a 185-residue protein sequence, read N- to C-terminus: Elongation factor P (185 aa).

This sequence belongs to the elongation factor P family.

Its subcellular location is the cytoplasm. It functions in the pathway protein biosynthesis; polypeptide chain elongation. In terms of biological role, involved in peptide bond synthesis. Stimulates efficient translation and peptide-bond synthesis on native or reconstituted 70S ribosomes in vitro. Probably functions indirectly by altering the affinity of the ribosome for aminoacyl-tRNA, thus increasing their reactivity as acceptors for peptidyl transferase. This chain is Elongation factor P, found in Lachnoclostridium phytofermentans (strain ATCC 700394 / DSM 18823 / ISDg) (Clostridium phytofermentans).